A 183-amino-acid polypeptide reads, in one-letter code: Negative modulator of initiation of replication (183 aa).

Residues 43 to 70 (VNDTQPVSAPAPSKAAPSAGNESRPQDR) form a disordered region. Residues 50-61 (SAPAPSKAAPSA) show a composition bias toward low complexity. Interaction with DNA regions lie at residues 89 to 90 (AV), 118 to 122 (RTRIY), and 152 to 158 (NTNTGRK).

Belongs to the SeqA family. As to quaternary structure, homodimer. Polymerizes to form helical filaments.

The protein resides in the cytoplasm. Functionally, negative regulator of replication initiation, which contributes to regulation of DNA replication and ensures that replication initiation occurs exactly once per chromosome per cell cycle. Binds to pairs of hemimethylated GATC sequences in the oriC region, thus preventing assembly of replication proteins and re-initiation at newly replicated origins. Repression is relieved when the region becomes fully methylated. This chain is Negative modulator of initiation of replication, found in Pantoea ananatis (strain AJ13355).